The sequence spans 31 residues: Cytochrome b6-f complex subunit 6 (31 aa).

Residues 4–24 (LTSYFGFLLAALTITSVLFIG) form a helical membrane-spanning segment.

The protein belongs to the PetL family. The 4 large subunits of the cytochrome b6-f complex are cytochrome b6, subunit IV (17 kDa polypeptide, PetD), cytochrome f and the Rieske protein, while the 4 small subunits are PetG, PetL, PetM and PetN. The complex functions as a dimer.

Its subcellular location is the plastid. It localises to the chloroplast thylakoid membrane. In terms of biological role, component of the cytochrome b6-f complex, which mediates electron transfer between photosystem II (PSII) and photosystem I (PSI), cyclic electron flow around PSI, and state transitions. PetL is important for photoautotrophic growth as well as for electron transfer efficiency and stability of the cytochrome b6-f complex. The polypeptide is Cytochrome b6-f complex subunit 6 (Silene conica (Striped corn catchfly)).